The sequence spans 94 residues: MFKVNEYFDGTVKSIAFEGTEGPATVGVMAPGEYEFGTAKREIMHVVSGALTVKLPGSDNWETFNAGDKFNVAADSKFQLKVAVDTAYLCEYRD.

It belongs to the nucleoside phosphorylase PpnP family.

The catalysed reaction is a purine D-ribonucleoside + phosphate = a purine nucleobase + alpha-D-ribose 1-phosphate. The enzyme catalyses adenosine + phosphate = alpha-D-ribose 1-phosphate + adenine. It carries out the reaction cytidine + phosphate = cytosine + alpha-D-ribose 1-phosphate. It catalyses the reaction guanosine + phosphate = alpha-D-ribose 1-phosphate + guanine. The catalysed reaction is inosine + phosphate = alpha-D-ribose 1-phosphate + hypoxanthine. The enzyme catalyses thymidine + phosphate = 2-deoxy-alpha-D-ribose 1-phosphate + thymine. It carries out the reaction uridine + phosphate = alpha-D-ribose 1-phosphate + uracil. It catalyses the reaction xanthosine + phosphate = alpha-D-ribose 1-phosphate + xanthine. Functionally, catalyzes the phosphorolysis of diverse nucleosides, yielding D-ribose 1-phosphate and the respective free bases. Can use uridine, adenosine, guanosine, cytidine, thymidine, inosine and xanthosine as substrates. Also catalyzes the reverse reactions. This is Pyrimidine/purine nucleoside phosphorylase from Pseudomonas putida (strain W619).